Consider the following 261-residue polypeptide: Small ribosomal subunit protein eS1 (261 aa).

Basic residues predominate over residues methionine 1–lysine 18. The tract at residues methionine 1–threonine 21 is disordered.

The protein belongs to the eukaryotic ribosomal protein eS1 family. As to quaternary structure, component of the small ribosomal subunit. Mature ribosomes consist of a small (40S) and a large (60S) subunit. The 40S subunit contains about 33 different proteins and 1 molecule of RNA (18S). The 60S subunit contains about 49 different proteins and 3 molecules of RNA (25S, 5.8S and 5S).

The protein resides in the cytoplasm. This chain is Small ribosomal subunit protein eS1 (cyc07), found in Daucus carota (Wild carrot).